The primary structure comprises 594 residues: Probable methylenetetrahydrofolate reductase (NADH) (594 aa).

Glu21 serves as the catalytic Proton donor/acceptor. NAD(+) contacts are provided by residues 21–26 (EYFPPK) and 52–53 (TW). Residues 52-53 (TW), His81, 111-113 (RGD), Tyr153, 157-160 (HPDA), Asp175, and Lys182 each bind FAD. Asp113 serves as a coordination point for substrate. Substrate contacts are provided by Gln193 and Tyr285.

This sequence belongs to the methylenetetrahydrofolate reductase family. As to quaternary structure, homodimer. Requires FAD as cofactor.

The enzyme catalyses (6S)-5-methyl-5,6,7,8-tetrahydrofolate + NAD(+) = (6R)-5,10-methylene-5,6,7,8-tetrahydrofolate + NADH + H(+). Its pathway is one-carbon metabolism; tetrahydrofolate interconversion. Its activity is regulated as follows. Plant MTHFRs strongly prefer NADH over NADPH. Not inhibited by methionine or S-adenosylmethionine. Its function is as follows. The probable reversibility of the MTHFR reaction in plants suggests that they can metabolize the methyl group of 5,10-methylenetetrahydrofolate to serine, sugars and starch. In Oryza sativa subsp. japonica (Rice), this protein is Probable methylenetetrahydrofolate reductase (NADH).